The following is a 587-amino-acid chain: Arginine--tRNA ligase (587 aa).

Residues 127-137 (PNLAKEMHVGH) carry the 'HIGH' region motif.

This sequence belongs to the class-I aminoacyl-tRNA synthetase family. Monomer.

It is found in the cytoplasm. It carries out the reaction tRNA(Arg) + L-arginine + ATP = L-arginyl-tRNA(Arg) + AMP + diphosphate. The chain is Arginine--tRNA ligase from Pseudomonas paraeruginosa (strain DSM 24068 / PA7) (Pseudomonas aeruginosa (strain PA7)).